A 256-amino-acid polypeptide reads, in one-letter code: Small ribosomal subunit protein uS2 (256 aa).

Positions 229 to 256 (PVDDNGDYGDFDEAIDEYADETDASESE) are disordered. Residues 232–256 (DNGDYGDFDEAIDEYADETDASESE) show a composition bias toward acidic residues.

This sequence belongs to the universal ribosomal protein uS2 family.

This Picosynechococcus sp. (strain ATCC 27264 / PCC 7002 / PR-6) (Agmenellum quadruplicatum) protein is Small ribosomal subunit protein uS2.